A 203-amino-acid chain; its full sequence is ATP-dependent Clp protease proteolytic subunit (203 aa).

Residue serine 98 is the Nucleophile of the active site. The active site involves histidine 123.

This sequence belongs to the peptidase S14 family. As to quaternary structure, fourteen ClpP subunits assemble into 2 heptameric rings which stack back to back to give a disk-like structure with a central cavity, resembling the structure of eukaryotic proteasomes.

It is found in the cytoplasm. The catalysed reaction is Hydrolysis of proteins to small peptides in the presence of ATP and magnesium. alpha-casein is the usual test substrate. In the absence of ATP, only oligopeptides shorter than five residues are hydrolyzed (such as succinyl-Leu-Tyr-|-NHMec, and Leu-Tyr-Leu-|-Tyr-Trp, in which cleavage of the -Tyr-|-Leu- and -Tyr-|-Trp bonds also occurs).. Cleaves peptides in various proteins in a process that requires ATP hydrolysis. Has a chymotrypsin-like activity. Plays a major role in the degradation of misfolded proteins. In Desulfotalea psychrophila (strain LSv54 / DSM 12343), this protein is ATP-dependent Clp protease proteolytic subunit.